A 309-amino-acid polypeptide reads, in one-letter code: MDLQNDIIVRGKSYEMPFSKGILARSLTAAGLKPSIAYRIAWDIYEMLKKENIRVIDKADLRRRVYYYLISKNYDEVAKKYLLWRMVLGRRPIVILIGGASGVGTSTIAFEIASRLGIPSVIGTDSIREVMRKVISRDLIPTLYESSYTAWKVLRDDEGNKYIKGFERHSEAVLTGVEGVIDRCLVEGQSVIIEGTHLVPTLLKDKYLENSHVVFIMLTIYNEELHKMRFYARGRVSSRPTERYLKYFKIIRMINDYMVETAKKKGIPVVENIKISETVDKCLNIITERLKTMIELEGLSEEDMLEEGL.

Positions 5–92 (NDIIVRGKSY…LWRMVLGRRP (88 aa)) constitute an ATP-cone domain.

This sequence belongs to the 2-phosphoglycerate kinase family. Requires a divalent metal cation as cofactor.

The catalysed reaction is (2R)-2-phosphoglycerate + ATP = (2R)-2,3-bisphosphoglycerate + ADP + H(+). Its pathway is thermoadapter biosynthesis; cyclic 2,3-diphosphoglycerate biosynthesis; cyclic 2,3-diphosphoglycerate from 2-phospho-D-glycerate: step 1/2. Its function is as follows. Catalyzes the phosphorylation of 2-phosphoglycerate to 2,3-diphosphoglycerate. Involved in the biosynthesis of cyclic 2,3-bisphosphoglycerate, a thermoprotectant. The polypeptide is 2-phosphoglycerate kinase (Methanocaldococcus jannaschii (strain ATCC 43067 / DSM 2661 / JAL-1 / JCM 10045 / NBRC 100440) (Methanococcus jannaschii)).